The chain runs to 534 residues: Cytochrome P450 monooxygenase AN1598 (534 aa).

N3 carries N-linked (GlcNAc...) asparagine glycosylation. Residues 25-45 form a helical membrane-spanning segment; the sequence is LYLEILGVLSVVYLLQTLVAY. N95 is a glycosylation site (N-linked (GlcNAc...) asparagine). C464 serves as a coordination point for heme. An N-linked (GlcNAc...) asparagine glycan is attached at N498.

This sequence belongs to the cytochrome P450 family. Requires heme as cofactor.

The protein localises to the membrane. Its pathway is secondary metabolite biosynthesis; terpenoid biosynthesis. Functionally, bifunctional terpene synthase; part of the gene cluster that mediates the biosynthesis of the diterpene ent-pimara-8(14),15-diene (PD). Within the cluster, the HMG-CoA reductase AN1593 functions in the mevalonate pathway, which produces isoprenoid precursors. The geranylgeranyl pyrophosphate (GGPP) synthase AN1592 is needed in the formation of GGPP, the precursor for diterpenes. Lastly, the pimaradiene synthase pbcA performs the 2 cyclization steps that convert GGPP to ent-pimara-8(14),15-diene. The putative roles of the remaining cluster enzymes in ent-pimara-8(14),15-diene biosynthesis is unclear. The cytochrome P450 monooxygenase AN1598, the glutathione S-transferase AN1595, the oxidoreductases AN1596 and AN1597 probably function as decorative enzymes. It is possible that in biological conditions the compound is oxidized to ent-pimara-8(14),15-dien-19-oic acid, which is a bioactive diterpene compound predominant in many plant extracts. The protein is Cytochrome P450 monooxygenase AN1598 of Emericella nidulans (strain FGSC A4 / ATCC 38163 / CBS 112.46 / NRRL 194 / M139) (Aspergillus nidulans).